The primary structure comprises 362 residues: ATP synthase F(1) complex catalytic subunit beta, mitochondrial (362 aa).

Position 14 is an N6-acetyllysine; alternate (Lys14). Position 14 is an N6-succinyllysine; alternate (Lys14). Lys51 is modified (N6-acetyllysine). ADP-binding residues include Val62, Val63, Gly64, Lys65, Thr66, and Val67. Val62 provides a ligand contact to ATP. Phosphate is bound by residues Val62, Val63, Gly64, Lys65, and Thr66. Gly64, Lys65, Thr66, and Val67 together coordinate ATP. Position 66 (Thr66) interacts with Mg(2+). Residue Glu91 coordinates Mg(2+). N6-acetyllysine; alternate is present on residues Lys112 and Lys117. Residues Lys112 and Lys117 each carry the N6-succinyllysine; alternate modification. Residue Thr165 is modified to Phosphothreonine. At Lys279 the chain carries N6-acetyllysine. At Ser286 the chain carries Phosphoserine. 2 positions are modified to N6-acetyllysine: Lys333 and Lys338.

The protein belongs to the ATPase alpha/beta chains family. As to quaternary structure, homotrimer. Component of the ATP synthase complex composed at least of ATP5F1A/subunit alpha, ATP5F1B/subunit beta, ATP5MC1/subunit c (homooctomer), MT-ATP6/subunit a, MT-ATP8/subunit 8, ATP5ME/subunit e, ATP5MF/subunit f, ATP5MG/subunit g, ATP5MK/subunit k, ATP5MJ/subunit j, ATP5F1C/subunit gamma, ATP5F1D/subunit delta, ATP5F1E/subunit epsilon, ATP5PF/subunit F6, ATP5PB/subunit b, ATP5PD/subunit d, ATP5PO/subunit OSCP. ATP synthase complex consists of a soluble F(1) head domain (subunits alpha(3) and beta(3)) - the catalytic core - and a membrane F(0) domain - the membrane proton channel (subunits c, a, 8, e, f, g, k and j). These two domains are linked by a central stalk (subunits gamma, delta, and epsilon) rotating inside the F1 region and a stationary peripheral stalk (subunits F6, b, d, and OSCP). Interacts with PPIF. Interacts with BCL2L1 isoform BCL-X(L); the interaction mediates the association of BCL2L1 isoform BCL-X(L) with the mitochondrial membrane F(1)F(0) ATP synthase and enhances neurons metabolic efficiency. Interacts with CLN5 and PPT1. Interacts with S100A1; this interaction increases F1-ATPase activity. Interacts with MTLN. Interacts with TTC5/STRAP; the interaction results in decreased mitochondrial ATP production.

It localises to the mitochondrion inner membrane. The catalysed reaction is ATP + H2O + 4 H(+)(in) = ADP + phosphate + 5 H(+)(out). Catalytic subunit beta, of the mitochondrial membrane ATP synthase complex (F(1)F(0) ATP synthase or Complex V) that produces ATP from ADP in the presence of a proton gradient across the membrane which is generated by electron transport complexes of the respiratory chain. ATP synthase complex consist of a soluble F(1) head domain - the catalytic core - and a membrane F(1) domain - the membrane proton channel. These two domains are linked by a central stalk rotating inside the F(1) region and a stationary peripheral stalk. During catalysis, ATP synthesis in the catalytic domain of F(1) is coupled via a rotary mechanism of the central stalk subunits to proton translocation. In vivo, can only synthesize ATP although its ATP hydrolase activity can be activated artificially in vitro. With the subunit alpha (ATP5F1A), forms the catalytic core in the F(1) domain. This Mesocricetus auratus (Golden hamster) protein is ATP synthase F(1) complex catalytic subunit beta, mitochondrial.